The primary structure comprises 429 residues: Glutamyl-tRNA reductase (429 aa).

Substrate-binding positions include 56–59 (TCNR), Ser-119, 124–126 (EPQ), and Gln-130. Residue Cys-57 is the Nucleophile of the active site. NADP(+) is bound at residue 199-204 (GAGEMI).

The protein belongs to the glutamyl-tRNA reductase family. Homodimer.

It carries out the reaction (S)-4-amino-5-oxopentanoate + tRNA(Glu) + NADP(+) = L-glutamyl-tRNA(Glu) + NADPH + H(+). It participates in porphyrin-containing compound metabolism; protoporphyrin-IX biosynthesis; 5-aminolevulinate from L-glutamyl-tRNA(Glu): step 1/2. Functionally, catalyzes the NADPH-dependent reduction of glutamyl-tRNA(Glu) to glutamate 1-semialdehyde (GSA). In Janthinobacterium sp. (strain Marseille) (Minibacterium massiliensis), this protein is Glutamyl-tRNA reductase.